The primary structure comprises 366 residues: 1-deoxy-D-xylulose 5-phosphate reductoisomerase (366 aa).

Residues threonine 7, glycine 8, serine 9, isoleucine 10, glycine 31, asparagine 33, and asparagine 111 each contribute to the NADPH site. Lysine 112 contributes to the 1-deoxy-D-xylulose 5-phosphate binding site. An NADPH-binding site is contributed by glutamate 113. Aspartate 131 serves as a coordination point for Mn(2+). 1-deoxy-D-xylulose 5-phosphate is bound by residues serine 132, glutamate 133, serine 162, and histidine 185. Position 133 (glutamate 133) interacts with Mn(2+). An NADPH-binding site is contributed by glycine 191. Positions 198, 203, 204, and 207 each coordinate 1-deoxy-D-xylulose 5-phosphate. Glutamate 207 provides a ligand contact to Mn(2+).

The protein belongs to the DXR family. The cofactor is Mg(2+). Mn(2+) serves as cofactor.

The catalysed reaction is 2-C-methyl-D-erythritol 4-phosphate + NADP(+) = 1-deoxy-D-xylulose 5-phosphate + NADPH + H(+). It functions in the pathway isoprenoid biosynthesis; isopentenyl diphosphate biosynthesis via DXP pathway; isopentenyl diphosphate from 1-deoxy-D-xylulose 5-phosphate: step 1/6. Catalyzes the NADPH-dependent rearrangement and reduction of 1-deoxy-D-xylulose-5-phosphate (DXP) to 2-C-methyl-D-erythritol 4-phosphate (MEP). The protein is 1-deoxy-D-xylulose 5-phosphate reductoisomerase of Nautilia profundicola (strain ATCC BAA-1463 / DSM 18972 / AmH).